The primary structure comprises 296 residues: GTPase Era (296 aa).

An Era-type G domain is found at 7–173; that stretch reads KAGFVSIIGR…VDLVREHLPE (167 aa). Positions 15-22 are G1; that stretch reads GRPNVGKS. A GTP-binding site is contributed by 15–22; the sequence is GRPNVGKS. The interval 41-45 is G2; it reads QTTRN. A G3 region spans residues 62–65; the sequence is DTPG. GTP is bound by residues 62–66 and 122–125; these read DTPGI and NKID. Positions 122–125 are G4; the sequence is NKID. The segment at 152-154 is G5; sequence ISA. The KH type-2 domain maps to 204–281; that stretch reads TNREVPYGTA…YLELFVQVQE (78 aa).

Belongs to the TRAFAC class TrmE-Era-EngA-EngB-Septin-like GTPase superfamily. Era GTPase family. Monomer.

It is found in the cytoplasm. The protein localises to the cell inner membrane. In terms of biological role, an essential GTPase that binds both GDP and GTP, with rapid nucleotide exchange. Plays a role in 16S rRNA processing and 30S ribosomal subunit biogenesis and possibly also in cell cycle regulation and energy metabolism. The protein is GTPase Era of Trichlorobacter lovleyi (strain ATCC BAA-1151 / DSM 17278 / SZ) (Geobacter lovleyi).